The primary structure comprises 20 residues: Putative beta-neurotoxin (20 aa).

An LCN-type CS-alpha/beta domain is found at 1 to 20 (KDGYLVGSDGCKYSCLTRPG).

As to expression, expressed by the venom gland.

It localises to the secreted. Its function is as follows. Beta toxins bind voltage-independently at site-4 of sodium channels (Nav) and shift the voltage of activation toward more negative potentials thereby affecting sodium channel activation and promoting spontaneous and repetitive firing. This chain is Putative beta-neurotoxin, found in Tityus pachyurus (Colombian scorpion).